Consider the following 313-residue polypeptide: Recombination-promoting nuclease pSLT051 (313 aa).

This sequence belongs to the Rpn/YhgA-like nuclease family.

Functionally, a low activity DNA endonuclease probably yielding 3'-hydroxyl ends. Involved in RecA-independent recombination and horizontal gene transfer. The chain is Recombination-promoting nuclease pSLT051 from Salmonella typhimurium (strain LT2 / SGSC1412 / ATCC 700720).